The chain runs to 251 residues: Triosephosphate isomerase (251 aa).

Position 9-11 (9-11) interacts with substrate; the sequence is NWK. H95 serves as the catalytic Electrophile. Catalysis depends on E167, which acts as the Proton acceptor. Substrate contacts are provided by residues G173, S212, and 233-234; that span reads GG.

This sequence belongs to the triosephosphate isomerase family. Homodimer.

The protein localises to the cytoplasm. It catalyses the reaction D-glyceraldehyde 3-phosphate = dihydroxyacetone phosphate. The protein operates within carbohydrate biosynthesis; gluconeogenesis. It functions in the pathway carbohydrate degradation; glycolysis; D-glyceraldehyde 3-phosphate from glycerone phosphate: step 1/1. Involved in the gluconeogenesis. Catalyzes stereospecifically the conversion of dihydroxyacetone phosphate (DHAP) to D-glyceraldehyde-3-phosphate (G3P). The sequence is that of Triosephosphate isomerase from Pseudomonas paraeruginosa (strain DSM 24068 / PA7) (Pseudomonas aeruginosa (strain PA7)).